Reading from the N-terminus, the 227-residue chain is Large ribosomal subunit protein uL3 (227 aa).

Residue Gln151 is modified to N5-methylglutamine.

It belongs to the universal ribosomal protein uL3 family. As to quaternary structure, part of the 50S ribosomal subunit. Forms a cluster with proteins L14 and L19. In terms of processing, methylated by PrmB.

One of the primary rRNA binding proteins, it binds directly near the 3'-end of the 23S rRNA, where it nucleates assembly of the 50S subunit. This Gluconacetobacter diazotrophicus (strain ATCC 49037 / DSM 5601 / CCUG 37298 / CIP 103539 / LMG 7603 / PAl5) protein is Large ribosomal subunit protein uL3.